Here is a 762-residue protein sequence, read N- to C-terminus: Semaphorin-4A (762 aa).

Residues 1-32 (MALPALGLDSWSFLGLFLFQLLLLFLPPATTA) form the signal peptide. The Extracellular segment spans residues 33–684 (GREGQGPTPR…LAAPKSYWPH (652 aa)). The region spanning 37 to 495 (QGPTPRVKYH…FSGGIWKVPR (459 aa)) is the Sema domain. A disulfide bridge links Cys-114 with Cys-125. 2 N-linked (GlcNAc...) asparagine glycosylation sites follow: Asn-121 and Asn-136. Cystine bridges form between Cys-143-Cys-152, Cys-270-Cys-380, and Cys-294-Cys-340. 2 N-linked (GlcNAc...) asparagine glycosylation sites follow: Asn-314 and Asn-497. A PSI domain is found at 497–544 (NCSVYESCMDCVLARDPHCAWDPESQTCRLLPTPILKSWKQDMQQGNP). 2 disulfide bridges follow: Cys-498-Cys-515 and Cys-507-Cys-524. Residues 574-632 (NSILELPCPQSSALASYHWSHGVEAIPEAPSTVYNGSLLLLLRDGAGGLYQCWATENDF) enclose the Ig-like C2-type domain. Asn-608 carries an N-linked (GlcNAc...) asparagine glycan. The chain crosses the membrane as a helical span at residues 685 to 705 (FLTVTVLLALVLSGALVTFLV). At 706–762 (SPLGALRARGKVQGCGTLPSREKAPLSSEQCLQPSKEGRTSASDMDADNNLQGTEVA) the chain is on the cytoplasmic side. The segment at 722-762 (TLPSREKAPLSSEQCLQPSKEGRTSASDMDADNNLQGTEVA) is disordered.

It belongs to the semaphorin family. As to quaternary structure, interacts with PLXNB1, PLXNB2, PLXNB3, PLXND1 and TIMD2.

It is found in the cell membrane. Functionally, cell surface receptor for PLXNB1, PLXNB2, PLXNB3 and PLXND1 that plays an important role in cell-cell signaling. Regulates glutamatergic and GABAergic synapse development. Promotes the development of inhibitory synapses in a PLXNB1-dependent manner and promotes the development of excitatory synapses in a PLXNB2-dependent manner. Plays a role in priming antigen-specific T-cells, promotes differentiation of Th1 T-helper cells, and thereby contributes to adaptive immunity. Promotes phosphorylation of TIMD2. Inhibits angiogenesis. Promotes axon growth cone collapse. Inhibits axonal extension by providing local signals to specify territories inaccessible for growing axons. In Bos taurus (Bovine), this protein is Semaphorin-4A (SEMA4A).